Reading from the N-terminus, the 929-residue chain is SCY1-like protein 2 (929 aa).

One can recognise a Protein kinase domain in the interval 32-327; it reads FDVGRHIASG…ADQMTKIPFF (296 aa). Residues 443–479 form an HEAT repeat; that stretch reads DEIKNSVLPMVYRALEAPSIQIQELCLNIIPTFANLI. Positions 661–701 form a coiled coil; sequence ESENKEDGLQNKHKRASLTLEEKQKLAKEQEQAQKLKSQQP. Ser-677 carries the post-translational modification Phosphoserine. Over residues 684–694 the composition is skewed to basic and acidic residues; sequence QKLAKEQEQAQ. Disordered regions lie at residues 684–709 and 906–929; these read QKLAKEQEQAQKLKSQQPLKPQVHTP and NFAQPPTTMTNSSSASNDLKDLFG. The segment covering 695 to 705 has biased composition (low complexity); that stretch reads KLKSQQPLKPQ. Residues 699–929 form a necessary for interaction with AP2 complex and clathrin, interaction with clathrin is necessary for its targeting to the TGN and endosomal membranes region; that stretch reads QQPLKPQVHT…ASNDLKDLFG (231 aa). The residue at position 708 (Thr-708) is a Phosphothreonine. The span at 912 to 922 shows a compositional bias: polar residues; that stretch reads TTMTNSSSASN.

It belongs to the protein kinase superfamily. As to quaternary structure, interacts with clathrin and AP2B1; the interaction mediates the association with the AP-2 complex. Could autophosphorylate in presence of poly-L-lysine.

It localises to the cytoplasmic vesicle. Its subcellular location is the clathrin-coated vesicle. It is found in the golgi apparatus. The protein resides in the trans-Golgi network membrane. The protein localises to the endosome membrane. Its function is as follows. Component of the AP2-containing clathrin coat that may regulate clathrin-dependent trafficking at plasma membrane, TGN and endosomal system. A possible serine/threonine-protein kinase toward the beta2-subunit of the plasma membrane adapter complex AP2 and other proteins in presence of poly-L-lysine has not been confirmed. By regulating the expression of excitatory receptors at synapses, plays an essential role in neuronal function and signaling and in brain development. The polypeptide is SCY1-like protein 2 (Homo sapiens (Human)).